A 144-amino-acid polypeptide reads, in one-letter code: Protein WAP-3 (144 aa).

A signal peptide spans 1–21 (MRSRSFLVLVAVFLICETLVA). The disordered stretch occupies residues 28–49 (RGPKGQGQDPVEGQDQDEGQGP). Position 34 (glycine 34) is a region of interest, 8 X 6 AA approximate tandem repeats. A run of 8 repeats spans residues 34-39 (GQDPVE), 40-45 (GQDQDE), 46-51 (GQGPVK), 58-63 (GQDLVK), 64-69 (GQDPVE), 70-75 (GQDPVK), 76-81 (AQLPDK), and 82-87 (VQDPVK). The interval 64–85 (GQDPVEGQDPVKAQLPDKVQDP) is disordered. A WAP domain is found at 97–144 (LFPKPGVCPKIIFCPLVNPPIKCWRDSHCPGVKKCCPSLCGKGCVTPR). 4 cysteine pairs are disulfide-bonded: cysteine 104–cysteine 132, cysteine 110–cysteine 136, cysteine 119–cysteine 131, and cysteine 125–cysteine 140.

Large intestine (relatively low levels).

This chain is Protein WAP-3, found in Sus scrofa (Pig).